The primary structure comprises 124 residues: ATP synthase epsilon chain (124 aa).

This sequence belongs to the ATPase epsilon chain family. F-type ATPases have 2 components, CF(1) - the catalytic core - and CF(0) - the membrane proton channel. CF(1) has five subunits: alpha(3), beta(3), gamma(1), delta(1), epsilon(1). CF(0) has three main subunits: a, b and c.

Its subcellular location is the cell membrane. Its function is as follows. Produces ATP from ADP in the presence of a proton gradient across the membrane. The protein is ATP synthase epsilon chain of Streptomyces griseus subsp. griseus (strain JCM 4626 / CBS 651.72 / NBRC 13350 / KCC S-0626 / ISP 5235).